A 424-amino-acid chain; its full sequence is Anaerobic glycerol-3-phosphate dehydrogenase subunit B (424 aa).

Belongs to the anaerobic G-3-P dehydrogenase subunit B family. Composed of a catalytic GlpA/B dimer and of membrane bound GlpC. FMN serves as cofactor.

The catalysed reaction is a quinone + sn-glycerol 3-phosphate = dihydroxyacetone phosphate + a quinol. Its pathway is polyol metabolism; glycerol degradation via glycerol kinase pathway; glycerone phosphate from sn-glycerol 3-phosphate (anaerobic route): step 1/1. In terms of biological role, conversion of glycerol 3-phosphate to dihydroxyacetone. Uses fumarate or nitrate as electron acceptor. This is Anaerobic glycerol-3-phosphate dehydrogenase subunit B from Yersinia pseudotuberculosis serotype I (strain IP32953).